Reading from the N-terminus, the 212-residue chain is Glycerol-3-phosphate acyltransferase (212 aa).

5 helical membrane passes run Ala-9–Leu-29, Gly-67–Ala-87, Trp-95–Gly-115, Met-128–Ile-148, and Leu-168–Leu-190.

This sequence belongs to the PlsY family. In terms of assembly, probably interacts with PlsX.

It is found in the cell inner membrane. The enzyme catalyses an acyl phosphate + sn-glycerol 3-phosphate = a 1-acyl-sn-glycero-3-phosphate + phosphate. The protein operates within lipid metabolism; phospholipid metabolism. Functionally, catalyzes the transfer of an acyl group from acyl-phosphate (acyl-PO(4)) to glycerol-3-phosphate (G3P) to form lysophosphatidic acid (LPA). This enzyme utilizes acyl-phosphate as fatty acyl donor, but not acyl-CoA or acyl-ACP. The chain is Glycerol-3-phosphate acyltransferase from Parasynechococcus marenigrum (strain WH8102).